The chain runs to 372 residues: Solute carrier family 35 member F6 (372 aa).

The N-terminal stretch at 1-18 (MAWTKYQLFLAGLMLVTG) is a signal peptide. The next 2 membrane-spanning stretches (helical) occupy residues 48 to 68 (FVQAVGMFLGEFSCLAAFYLL) and 89 to 109 (LLFLPPALCDMTGTSIMYVAL). In terms of domain architecture, EamA spans 105–160 (MYVALNMTSASSFQMLRGAVIIFTGLFSVAFLDRRLAPSQWLGILITIAGLVVVGL). N-linked (GlcNAc...) asparagine glycosylation is present at Asn110. Helical transmembrane passes span 116 to 136 (SFQMLRGAVIIFTGLFSVAFL), 145 to 165 (WLGILITIAGLVVVGLADLLS), 176 to 196 (VITGDLLIIMAQIIIAIQMVL), 211 to 231 (AVGIEGFFGFVILSLLLVPMF), 261 to 281 (LIALALLGNISSIAFFNFSGI), 293 to 312 (MVLDTLRTIVIWAFTLALGW), and 320 to 336 (ILGFLILLMGTALYNGL). Thr366 is modified (phosphothreonine).

Belongs to the SLC35F solute transporter family. In terms of assembly, interacts with SLC25A5.

It is found in the mitochondrion. Its subcellular location is the lysosome membrane. Functionally, involved in the maintenance of mitochondrial membrane potential in pancreatic ductal adenocarcinoma (PDAC) cells. Promotes pancreatic ductal adenocarcinoma (PDAC) cell growth. May play a role as a nucleotide-sugar transporter. The protein is Solute carrier family 35 member F6 (Slc35f6) of Mus musculus (Mouse).